The primary structure comprises 304 residues: HTH-type transcriptional regulator AdmX (304 aa).

The region spanning 1–58 (MKLRHLEIFYTVMTCGSLSRAAESLNISQPAASKSLKNAELKLGFKLFQRVRGKLLPS) is the HTH lysR-type domain. Residues 18 to 37 (LSRAAESLNISQPAASKSLK) constitute a DNA-binding region (H-T-H motif).

The protein belongs to the LysR transcriptional regulatory family.

The protein resides in the cytoplasm. AdmX-mediated transcription is inhibited by indole-3-acetic and indole-3-pyruvic acids. AdmX recognizes and binds the auxin indole-3-acetic acid (IAA), which causes conformational changes in AdmX that result in the inhibition of the expression of the andrimid gene cluster and the suppression of antibiotic production. It also recognizes indole-3-pyruvic acid (IPA), an intermediate of the main IAA biosynthetic pathway in plants and plant beneficial bacteria, which also prevents andrimid synthesis, but to a much lesser extent. In terms of biological role, positively regulates the biosynthesis of andrimid, a broad-spectrum antibiotic, by activating the expression of the adm biosynthetic gene cluster. It specifically binds to a region within the adm promoter. The polypeptide is HTH-type transcriptional regulator AdmX (Serratia plymuthica).